The sequence spans 171 residues: 3-hydroxydecanoyl-[acyl-carrier-protein] dehydratase (171 aa).

Residue His70 is part of the active site.

Belongs to the thioester dehydratase family. FabA subfamily. Homodimer.

It is found in the cytoplasm. The catalysed reaction is a (3R)-hydroxyacyl-[ACP] = a (2E)-enoyl-[ACP] + H2O. It catalyses the reaction (3R)-hydroxydecanoyl-[ACP] = (2E)-decenoyl-[ACP] + H2O. It carries out the reaction (2E)-decenoyl-[ACP] = (3Z)-decenoyl-[ACP]. It functions in the pathway lipid metabolism; fatty acid biosynthesis. Functionally, necessary for the introduction of cis unsaturation into fatty acids. Catalyzes the dehydration of (3R)-3-hydroxydecanoyl-ACP to E-(2)-decenoyl-ACP and then its isomerization to Z-(3)-decenoyl-ACP. Can catalyze the dehydratase reaction for beta-hydroxyacyl-ACPs with saturated chain lengths up to 16:0, being most active on intermediate chain length. This chain is 3-hydroxydecanoyl-[acyl-carrier-protein] dehydratase, found in Photobacterium profundum (strain SS9).